We begin with the raw amino-acid sequence, 664 residues long: Frizzled-3 (664 aa).

The first 16 residues, 1-16 (MAAYLISFIWVSVILA), serve as a signal peptide directing secretion. Residues 17–204 (QKSMGHSLFA…REELSFARYF (188 aa)) are Extracellular-facing. The FZ domain maps to 22 to 135 (HSLFACEPIT…CSRFPDCDEP (114 aa)). 5 disulfides stabilise this stretch: cysteine 27-cysteine 88, cysteine 35-cysteine 81, cysteine 72-cysteine 109, cysteine 98-cysteine 132, and cysteine 102-cysteine 126. N-linked (GlcNAc...) asparagine glycosylation occurs at asparagine 41. The chain crosses the membrane as a helical span at residues 205–225 (IGVISIVCLSATLFTFLTFLI). Topologically, residues 226–236 (DVTRFRYPERP) are cytoplasmic. The chain crosses the membrane as a helical span at residues 237–257 (IIFYAVCYMMVSLIFFIGFLL). Topologically, residues 258-287 (EDKVACNGANPSQYKASTVTQGSHNKACTM) are extracellular. A helical membrane pass occupies residues 288-308 (LFMVLYFFTMAGSVWWVILTI). At 309 to 327 (TWFLAAVPKWGSEAIEKKA) the chain is on the cytoplasmic side. A helical membrane pass occupies residues 328–348 (LLFHASAWGIPGTLTIILLAM). Topologically, residues 349–373 (NKIEGDNISGVCFVGLYDVHALRYF) are extracellular. N-linked (GlcNAc...) asparagine glycosylation occurs at asparagine 355. Residues 374 to 394 (VLAPLCLDVVVGVSLLLAGII) form a helical membrane-spanning segment. Residues 395 to 419 (SLNRVRIEIPLEKENQDKLVKFMIR) are Cytoplasmic-facing. Residues 420–440 (IGVFSILYLVPLLVVIGCYFY) form a helical membrane-spanning segment. Topologically, residues 441 to 476 (EQAYRGVWETTWVQERCREYHIPCPYKVTQTSRPDL) are extracellular. A helical membrane pass occupies residues 477 to 497 (ILFLMKYLMLLVVGIPSVFWV). The Cytoplasmic portion of the chain corresponds to 498-664 (GSKKTCFEWA…RVIEADATSA (167 aa)). The Lys-Thr-X-X-X-Trp motif, mediates interaction with the PDZ domain of Dvl family members signature appears at 501 to 506 (KTCFEW). A disordered region spans residues 537-664 (RDPNTPIVRK…RVIEADATSA (128 aa)). 2 stretches are compositionally biased toward polar residues: residues 549–564 (GTST…STQL) and 573–585 (KAGS…SSYH).

It belongs to the G-protein coupled receptor Fz/Smo family. As to expression, expression restricted to the early nervous system.

Its subcellular location is the membrane. The protein localises to the cell membrane. The protein resides in the cell surface. It is found in the apical cell membrane. Its function is as follows. Receptor for Wnt proteins. Most of frizzled receptors are coupled to the beta-catenin canonical signaling pathway, which leads to the activation of disheveled proteins, inhibition of GSK-3 kinase, nuclear accumulation of beta-catenin and activation of Wnt target genes. A second signaling pathway involving PKC and calcium fluxes has been seen for some family members, but it is not yet clear if it represents a distinct pathway or if it can be integrated in the canonical pathway, as PKC seems to be required for Wnt-mediated inactivation of GSK-3 kinase. Both pathways seem to involve interactions with G-proteins. Activated by Wnt8. Involved in transduction and intercellular transmission of polarity information during tissue morphogenesis and/or in differentiated tissues. Plays a role in controlling early axon growth and guidance processes necessary for the formation of a subset of central and peripheral major fiber tracts. Involved in the migration of cranial neural crest cells. May also be implicated in the transmission of sensory information from the trunk and limbs to the brain. Controls commissural sensory axons guidance after midline crossing along the anterior-posterior axis in the developing spinal cord in a Wnt-dependent signaling pathway. Together with FZD6, is involved in the neural tube closure and plays a role in the regulation of the establishment of planar cell polarity (PCP). Promotes neurogenesis by maintaining sympathetic neuroblasts within the cell cycle in a beta-catenin-dependent manner. This chain is Frizzled-3 (fzd3), found in Xenopus laevis (African clawed frog).